A 298-amino-acid chain; its full sequence is HTH-type transcriptional regulator ArgP (298 aa).

One can recognise an HTH lysR-type domain in the interval 4-60 (LDYKWIEALDAVVAQGGFERAAEELYISQSAVSQRIKQLERFLAQSVLIREQPPKPT). A DNA-binding region (H-T-H motif) is located at residues 21 to 40 (FERAAEELYISQSAVSQRIK).

It belongs to the LysR transcriptional regulatory family. In terms of assembly, homodimer.

In terms of biological role, controls the transcription of genes involved in arginine and lysine metabolism. The protein is HTH-type transcriptional regulator ArgP of Vibrio vulnificus (strain YJ016).